Consider the following 206-residue polypeptide: Peptidyl-tRNA hydrolase (206 aa).

Tyr-14 is a tRNA binding site. His-19 functions as the Proton acceptor in the catalytic mechanism. The tRNA site is built by Phe-64 and Asn-66. The disordered stretch occupies residues Val-185–Arg-206. Basic and acidic residues predominate over residues Ala-189–Arg-206.

It belongs to the PTH family. In terms of assembly, monomer.

The protein localises to the cytoplasm. The enzyme catalyses an N-acyl-L-alpha-aminoacyl-tRNA + H2O = an N-acyl-L-amino acid + a tRNA + H(+). Functionally, hydrolyzes ribosome-free peptidyl-tRNAs (with 1 or more amino acids incorporated), which drop off the ribosome during protein synthesis, or as a result of ribosome stalling. Catalyzes the release of premature peptidyl moieties from peptidyl-tRNA molecules trapped in stalled 50S ribosomal subunits, and thus maintains levels of free tRNAs and 50S ribosomes. The sequence is that of Peptidyl-tRNA hydrolase from Herpetosiphon aurantiacus (strain ATCC 23779 / DSM 785 / 114-95).